The sequence spans 175 residues: Apoptosis regulator Bcl-2 homolog (175 aa).

The mediates interaction with human NOP53 and localization to host nucleolus stretch occupies residues 37–42 (KLYITG). Residues 153 to 173 (MTALLGSIALLATILAAVAMS) form a helical membrane-spanning segment.

The protein belongs to the Bcl-2 family. In terms of assembly, interacts with human NOP53; may sequester ORF16 in host nucleolus and reduce its antiapoptotic activity. Interacts with ORF55.

Its subcellular location is the host membrane. It localises to the host mitochondrion. The protein localises to the host nucleus. The protein resides in the host nucleolus. In terms of biological role, plays a role in the protection against apoptosis mediated by cytotoxic cells during the immune response to acute and persistent viral infection. Contributes therefore to latency establishment. Also plays a role in the inhibition of host starvation-induced autophagy which ultimately contributes to the viral chronic infection. Also participates in the viral genome replication within host nucleus. This is Apoptosis regulator Bcl-2 homolog (vBCL2) from Homo sapiens (Human).